The following is a 171-amino-acid chain: ATP synthase subunit b (171 aa).

The chain crosses the membrane as a helical span at residues 4–24 (IAFFVICVGFPSLIFASASIQ).

It belongs to the ATPase B chain family. F-type ATPases have 2 components, F(1) - the catalytic core - and F(0) - the membrane proton channel. F(1) has five subunits: alpha(3), beta(3), gamma(1), delta(1), epsilon(1). F(0) has three main subunits: a(1), b(2) and c(10-14). The alpha and beta chains form an alternating ring which encloses part of the gamma chain. F(1) is attached to F(0) by a central stalk formed by the gamma and epsilon chains, while a peripheral stalk is formed by the delta and b chains.

It is found in the cell inner membrane. F(1)F(0) ATP synthase produces ATP from ADP in the presence of a proton or sodium gradient. F-type ATPases consist of two structural domains, F(1) containing the extramembraneous catalytic core and F(0) containing the membrane proton channel, linked together by a central stalk and a peripheral stalk. During catalysis, ATP synthesis in the catalytic domain of F(1) is coupled via a rotary mechanism of the central stalk subunits to proton translocation. Its function is as follows. Component of the F(0) channel, it forms part of the peripheral stalk, linking F(1) to F(0). The polypeptide is ATP synthase subunit b (Helicobacter hepaticus (strain ATCC 51449 / 3B1)).